The chain runs to 411 residues: Serine hydroxymethyltransferase (411 aa).

Residue 120–122 (GHL) participates in (6S)-5,6,7,8-tetrahydrofolate binding. K225 bears the N6-(pyridoxal phosphate)lysine mark. 350–352 (SPF) serves as a coordination point for (6S)-5,6,7,8-tetrahydrofolate.

The protein belongs to the SHMT family. In terms of assembly, homodimer. Requires pyridoxal 5'-phosphate as cofactor.

It localises to the cytoplasm. It catalyses the reaction (6R)-5,10-methylene-5,6,7,8-tetrahydrofolate + glycine + H2O = (6S)-5,6,7,8-tetrahydrofolate + L-serine. It participates in one-carbon metabolism; tetrahydrofolate interconversion. It functions in the pathway amino-acid biosynthesis; glycine biosynthesis; glycine from L-serine: step 1/1. Its function is as follows. Catalyzes the reversible interconversion of serine and glycine with tetrahydrofolate (THF) serving as the one-carbon carrier. This reaction serves as the major source of one-carbon groups required for the biosynthesis of purines, thymidylate, methionine, and other important biomolecules. Also exhibits THF-independent aldolase activity toward beta-hydroxyamino acids, producing glycine and aldehydes, via a retro-aldol mechanism. This is Serine hydroxymethyltransferase from Lactobacillus gasseri (strain ATCC 33323 / DSM 20243 / BCRC 14619 / CIP 102991 / JCM 1131 / KCTC 3163 / NCIMB 11718 / NCTC 13722 / AM63).